The sequence spans 163 residues: Secreted RxLR effector protein 135 (163 aa).

An N-terminal signal peptide occupies residues 1–20 (MRRLYLFVLILATFLTTSHG). The RxLR-dEER signature appears at 33–45 (RGLQEEAGEDEER). The segment at 94–127 (KNAGKPKRQTPQIAATGPAKPKVQSPEEAAAVPG) is disordered.

This sequence belongs to the RxLR effector family.

It is found in the secreted. The protein resides in the host nucleus. Its subcellular location is the host cytoplasm. In terms of biological role, secreted effector that completely suppresses the host cell death induced by cell death-inducing proteins. In Plasmopara viticola (Downy mildew of grapevine), this protein is Secreted RxLR effector protein 135.